A 489-amino-acid chain; its full sequence is ATP-dependent zinc metalloprotease FtsH 3 (489 aa).

Residues 1–14 (MNPRPVRPGGSLQQ) lie on the Cytoplasmic side of the membrane. The helical transmembrane segment at 15–31 (SLLALGSLSVAVGLAVW) threads the bilayer. Residues 32-489 (QQRTLGRGRS…GPRPARPAMN (458 aa)) lie on the Extracellular side of the membrane. 95 to 102 (GPPGTGKT) lines the ATP pocket. Residue histidine 315 coordinates Zn(2+). Glutamate 316 is an active-site residue. Zn(2+) is bound by residues histidine 319 and aspartate 391.

It in the central section; belongs to the AAA ATPase family. This sequence in the C-terminal section; belongs to the peptidase M41 family. In terms of assembly, homohexamer. Requires Zn(2+) as cofactor.

The protein localises to the cell membrane. Acts as a processive, ATP-dependent zinc metallopeptidase for both cytoplasmic and membrane proteins. Plays a role in the quality control of integral membrane proteins. The protein is ATP-dependent zinc metalloprotease FtsH 3 of Sphaerobacter thermophilus (strain ATCC 49802 / DSM 20745 / KCCM 41009 / NCIMB 13125 / S 6022).